A 651-amino-acid chain; its full sequence is Choline transporter-like protein 1 (651 aa).

The Cytoplasmic segment spans residues 1–25 (MGCCGSTQNSKRDWRPLEEHSCTDI). Residues 26 to 46 (PWLLLFILFCVGMGFICGFSI) form a helical membrane-spanning segment. At 47–208 (ATGAASRLVF…RLISGVMTSK (162 aa)) the chain is on the extracellular side. N-linked (GlcNAc...) asparagine glycosylation is found at N131 and N176. A helical membrane pass occupies residues 209–229 (EIIMGLCLLSLVLSMILMVII). The Cytoplasmic portion of the chain corresponds to 230–234 (RYISR). The helical transmembrane segment at 235-255 (VLVWIITILVVLGSLGGTGVL) threads the bilayer. The Extracellular segment spans residues 256-284 (WWLYADNKKSLNENLPPDQLQVSKDNLQA). Residues 285-305 (LLVYAIAATVFTVILLLMMLI) traverse the membrane as a helical segment. The Cytoplasmic segment spans residues 306-311 (MRKRVA). Residues 312 to 332 (LTIALFNVAGKVFIHLPLLVF) traverse the membrane as a helical segment. The Extracellular segment spans residues 333 to 334 (QP). The helical transmembrane segment at 335–355 (FWTFFALLLFWVYWVMVLLFL) threads the bilayer. Residues 356–376 (GTAGDPFTNEQGFVEFRINGP) are Cytoplasmic-facing. The chain crosses the membrane as a helical span at residues 377-397 (LQYMWWYHLVGLIWISEFILA). Residues 398-438 (CQQMTIAGAVVTYYFTRNKNDLPFTPILASVNRLIRYHLGT) are Extracellular-facing. Residues 439 to 459 (VAKGAFIITLVKIPRMILMYI) traverse the membrane as a helical segment. The Cytoplasmic portion of the chain corresponds to 460–533 (HSQLKGKENA…RVAAINTVGD (74 aa)). The helical transmembrane segment at 534–554 (FMLFLGKILIVSCTGLAGIML) threads the bilayer. At 555-562 (LNYQRDYT) the chain is on the extracellular side. Residues 563-583 (VWVLPLIIVCLFAFLVAHCFL) traverse the membrane as a helical segment. The Cytoplasmic portion of the chain corresponds to 584 to 651 (SIYEMVVDVL…KPMASGTSTA (68 aa)). Residues 629 to 651 (LKEPGSTAEGRELKPMASGTSTA) are disordered.

This sequence belongs to the CTL (choline transporter-like) family.

It is found in the cell membrane. The protein resides in the mitochondrion outer membrane. It catalyses the reaction choline(out) + n H(+)(in) = choline(in) + n H(+)(out). The catalysed reaction is ethanolamine(out) + n H(+)(in) = ethanolamine(in) + n H(+)(out). Its function is as follows. Choline/H+ antiporter. Also acts as a high-affinity ethanolamine/H+ antiporter, regulating the supply of extracellular ethanolamine (Etn) for the CDP-Etn pathway, redistribute intracellular Etn and balance the CDP-Cho and CDP-Etn arms of the Kennedy pathway. Involved in membrane synthesis and myelin production. In Xenopus laevis (African clawed frog), this protein is Choline transporter-like protein 1 (slc44a1).